A 599-amino-acid chain; its full sequence is Elongation factor 4 (599 aa).

In terms of domain architecture, tr-type G spans 2 to 184 (KNIRNFSIIA…RLVRDIPPPE (183 aa)). Residues 14–19 (DHGKST) and 131–134 (NKID) contribute to the GTP site.

It belongs to the TRAFAC class translation factor GTPase superfamily. Classic translation factor GTPase family. LepA subfamily.

The protein resides in the cell inner membrane. The enzyme catalyses GTP + H2O = GDP + phosphate + H(+). In terms of biological role, required for accurate and efficient protein synthesis under certain stress conditions. May act as a fidelity factor of the translation reaction, by catalyzing a one-codon backward translocation of tRNAs on improperly translocated ribosomes. Back-translocation proceeds from a post-translocation (POST) complex to a pre-translocation (PRE) complex, thus giving elongation factor G a second chance to translocate the tRNAs correctly. Binds to ribosomes in a GTP-dependent manner. The polypeptide is Elongation factor 4 (Escherichia fergusonii (strain ATCC 35469 / DSM 13698 / CCUG 18766 / IAM 14443 / JCM 21226 / LMG 7866 / NBRC 102419 / NCTC 12128 / CDC 0568-73)).